We begin with the raw amino-acid sequence, 116 residues long: MMHHLIQEITKEQLRTDLPDFRPGDTVRVHVKVIEGNRERIQVFEGVVIKRRGAGISETFTVRKVSYGVGVERTFPVHTPKIAKLEVVRRGKVRRAKLYYLRQLRGKAARIKEIVR.

Belongs to the bacterial ribosomal protein bL19 family.

Its function is as follows. This protein is located at the 30S-50S ribosomal subunit interface and may play a role in the structure and function of the aminoacyl-tRNA binding site. The polypeptide is Large ribosomal subunit protein bL19 (Geobacillus sp. (strain WCH70)).